Reading from the N-terminus, the 487-residue chain is Probable Xaa-Pro aminopeptidase MGYG_06974 (487 aa).

The Mn(2+) site is built by D255, D266, E414, and E458.

This sequence belongs to the peptidase M24B family. The cofactor is Mn(2+).

It catalyses the reaction Release of any N-terminal amino acid, including proline, that is linked to proline, even from a dipeptide or tripeptide.. Functionally, catalyzes the removal of a penultimate prolyl residue from the N-termini of peptides. The chain is Probable Xaa-Pro aminopeptidase MGYG_06974 from Arthroderma gypseum (strain ATCC MYA-4604 / CBS 118893) (Microsporum gypseum).